The chain runs to 342 residues: Isopentenyl-diphosphate delta-isomerase (342 aa).

11–12 (RK) is a substrate binding site. FMN-binding positions include S68, 69-71 (SMT), S99, and N127. 99–101 (SMR) serves as a coordination point for substrate. Q162 is a substrate binding site. E163 serves as a coordination point for Mg(2+). FMN is bound by residues K194, T224, 274–276 (GLK), and 295–296 (AG).

This sequence belongs to the IPP isomerase type 2 family. Homooctamer. Dimer of tetramers. Requires FMN as cofactor. The cofactor is NADPH. Mg(2+) is required as a cofactor.

It localises to the cytoplasm. It carries out the reaction isopentenyl diphosphate = dimethylallyl diphosphate. Functionally, involved in the biosynthesis of isoprenoids. Catalyzes the 1,3-allylic rearrangement of the homoallylic substrate isopentenyl (IPP) to its allylic isomer, dimethylallyl diphosphate (DMAPP). The sequence is that of Isopentenyl-diphosphate delta-isomerase from Rickettsia peacockii (strain Rustic).